A 49-amino-acid chain; its full sequence is Large ribosomal subunit protein bL33A (49 aa).

Belongs to the bacterial ribosomal protein bL33 family.

This is Large ribosomal subunit protein bL33A from Staphylococcus haemolyticus (strain JCSC1435).